The primary structure comprises 305 residues: Putative glutamine--fructose-6-phosphate aminotransferase [isomerizing] (305 aa).

The active-site Nucleophile; for GATase activity is the Cys-2. A Glutamine amidotransferase type-2 domain is found at 2-305 (CGIFGYCNFL…RLCITSAVCE (304 aa)).

The enzyme catalyses D-fructose 6-phosphate + L-glutamine = D-glucosamine 6-phosphate + L-glutamate. Its pathway is nucleotide-sugar biosynthesis; UDP-N-acetyl-alpha-D-glucosamine biosynthesis; alpha-D-glucosamine 6-phosphate from D-fructose 6-phosphate: step 1/1. Functionally, involved in amino sugar synthesis (formation of chitin, supplies the amino sugars of asparagine-linked oligosaccharides of glycoproteins). The chain is Putative glutamine--fructose-6-phosphate aminotransferase [isomerizing] from Saccharomyces cerevisiae (strain Lalvin EC1118 / Prise de mousse) (Baker's yeast).